Here is a 348-residue protein sequence, read N- to C-terminus: Phosphoribosylformylglycinamidine cyclo-ligase (348 aa).

It belongs to the AIR synthase family.

It is found in the cytoplasm. The catalysed reaction is 2-formamido-N(1)-(5-O-phospho-beta-D-ribosyl)acetamidine + ATP = 5-amino-1-(5-phospho-beta-D-ribosyl)imidazole + ADP + phosphate + H(+). It functions in the pathway purine metabolism; IMP biosynthesis via de novo pathway; 5-amino-1-(5-phospho-D-ribosyl)imidazole from N(2)-formyl-N(1)-(5-phospho-D-ribosyl)glycinamide: step 2/2. The polypeptide is Phosphoribosylformylglycinamidine cyclo-ligase (Citrifermentans bemidjiense (strain ATCC BAA-1014 / DSM 16622 / JCM 12645 / Bem) (Geobacter bemidjiensis)).